Here is a 225-residue protein sequence, read N- to C-terminus: NAD(P)H-quinone oxidoreductase subunit K, chloroplastic (225 aa).

Positions 43, 44, 108, and 139 each coordinate [4Fe-4S] cluster.

Belongs to the complex I 20 kDa subunit family. NDH is composed of at least 16 different subunits, 5 of which are encoded in the nucleus. It depends on [4Fe-4S] cluster as a cofactor.

Its subcellular location is the plastid. It localises to the chloroplast thylakoid membrane. It carries out the reaction a plastoquinone + NADH + (n+1) H(+)(in) = a plastoquinol + NAD(+) + n H(+)(out). The enzyme catalyses a plastoquinone + NADPH + (n+1) H(+)(in) = a plastoquinol + NADP(+) + n H(+)(out). Functionally, NDH shuttles electrons from NAD(P)H:plastoquinone, via FMN and iron-sulfur (Fe-S) centers, to quinones in the photosynthetic chain and possibly in a chloroplast respiratory chain. The immediate electron acceptor for the enzyme in this species is believed to be plastoquinone. Couples the redox reaction to proton translocation, and thus conserves the redox energy in a proton gradient. This Populus alba (White poplar) protein is NAD(P)H-quinone oxidoreductase subunit K, chloroplastic.